We begin with the raw amino-acid sequence, 722 residues long: Zinc finger BED domain-containing protein RICESLEEPER 2 (722 aa).

The BED-type zinc finger occupies 66-134; that stretch reads RKKSLVWEHF…QEHKLALTPA (69 aa). Positions 89, 92, 113, and 127 each coordinate Zn(2+). Positions 572–592 are disordered; the sequence is VEQGDGNNAPASENGTQATAP. The span at 576–592 shows a compositional bias: polar residues; it reads DGNNAPASENGTQATAP. The tract at residues 617–702 is HATC (Hobo-Ac-Tam3) domain; sequence ELEQYLDESL…EALVCAKDWL (86 aa).

Homodimer.

It localises to the nucleus. Transposase-like protein that is essential for plant growth and development. May regulate global gene expression by recruiting other cellular factors. This Oryza sativa subsp. japonica (Rice) protein is Zinc finger BED domain-containing protein RICESLEEPER 2.